The following is a 142-amino-acid chain: Small ribosomal subunit protein bS6 (142 aa).

A compositionally biased stretch (basic and acidic residues) spans 110–133; sequence NKKPSHAKEKHEKTEHTHSHHTEE. The disordered stretch occupies residues 110–142; sequence NKKPSHAKEKHEKTEHTHSHHTEETESVGSHSK.

The protein belongs to the bacterial ribosomal protein bS6 family.

Its function is as follows. Binds together with bS18 to 16S ribosomal RNA. The protein is Small ribosomal subunit protein bS6 of Helicobacter pylori (strain Shi470).